Reading from the N-terminus, the 364-residue chain is Fructose-bisphosphate aldolase B (364 aa).

The residue at position 2 (Ala2) is an N-acetylalanine. N6-succinyllysine is present on Lys13. Ser36 carries the phosphoserine modification. Thr39 is subject to Phosphothreonine. Arg43 contacts beta-D-fructose 1,6-bisphosphate. Residue Ser89 is modified to Phosphoserine. Thr119 carries the post-translational modification Phosphothreonine. The residue at position 121 (Lys121) is an N6-succinyllysine. Phosphoserine is present on Ser132. Catalysis depends on Glu188, which acts as the Proton acceptor. Ser206 bears the Phosphoserine mark. Residue Lys230 is the Schiff-base intermediate with dihydroxyacetone-P of the active site. Phosphoserine is present on residues Ser272, Ser276, Ser299, and Ser301. 272-274 (SGG) contacts beta-D-fructose 1,6-bisphosphate. Arg304 lines the beta-D-fructose 1,6-bisphosphate pocket. Residue Ser309 is modified to Phosphoserine. At Lys317 the chain carries N6-succinyllysine.

The protein belongs to the class I fructose-bisphosphate aldolase family. Homotetramer. Interacts with BBS1, BBS2, BBS4 and BBS7. Forms a ternary complex with G6PD and TP53; this interaction is direct.

It localises to the cytoplasm. The protein localises to the cytosol. It is found in the cytoskeleton. The protein resides in the microtubule organizing center. Its subcellular location is the centrosome. It localises to the centriolar satellite. It catalyses the reaction beta-D-fructose 1,6-bisphosphate = D-glyceraldehyde 3-phosphate + dihydroxyacetone phosphate. It carries out the reaction beta-D-fructose 1-phosphate = D-glyceraldehyde + dihydroxyacetone phosphate. It functions in the pathway carbohydrate degradation; glycolysis; D-glyceraldehyde 3-phosphate and glycerone phosphate from D-glucose: step 4/4. It participates in carbohydrate biosynthesis; gluconeogenesis. The protein operates within carbohydrate metabolism; fructose metabolism. Catalyzes the aldol cleavage of fructose 1,6-biphosphate to form two triosephosphates dihydroxyacetone phosphate and D-glyceraldehyde 3-phosphate in glycolysis as well as the reverse stereospecific aldol addition reaction in gluconeogenesis. In fructolysis, metabolizes fructose 1-phosphate derived from the phosphorylation of dietary fructose by fructokinase into dihydroxyacetone phosphate and D-glyceraldehyde. Acts as an adapter independently of its enzymatic activity, exerts a tumor suppressor role by stabilizing the ternary complex with G6PD and TP53 to inhibit G6PD activity and keep oxidative pentose phosphate metabolism in check. This Mus musculus (Mouse) protein is Fructose-bisphosphate aldolase B.